A 489-amino-acid polypeptide reads, in one-letter code: Lysine--tRNA ligase (489 aa).

Residues Glu-399 and Glu-406 each contribute to the Mg(2+) site.

It belongs to the class-II aminoacyl-tRNA synthetase family. In terms of assembly, homodimer. It depends on Mg(2+) as a cofactor.

It is found in the cytoplasm. It catalyses the reaction tRNA(Lys) + L-lysine + ATP = L-lysyl-tRNA(Lys) + AMP + diphosphate. This is Lysine--tRNA ligase (lysS) from Mycoplasma pneumoniae (strain ATCC 29342 / M129 / Subtype 1) (Mycoplasmoides pneumoniae).